The sequence spans 177 residues: ATP synthase subunit delta (177 aa).

This sequence belongs to the ATPase delta chain family. As to quaternary structure, F-type ATPases have 2 components, F(1) - the catalytic core - and F(0) - the membrane proton channel. F(1) has five subunits: alpha(3), beta(3), gamma(1), delta(1), epsilon(1). F(0) has three main subunits: a(1), b(2) and c(10-14). The alpha and beta chains form an alternating ring which encloses part of the gamma chain. F(1) is attached to F(0) by a central stalk formed by the gamma and epsilon chains, while a peripheral stalk is formed by the delta and b chains.

Its subcellular location is the cell inner membrane. In terms of biological role, f(1)F(0) ATP synthase produces ATP from ADP in the presence of a proton or sodium gradient. F-type ATPases consist of two structural domains, F(1) containing the extramembraneous catalytic core and F(0) containing the membrane proton channel, linked together by a central stalk and a peripheral stalk. During catalysis, ATP synthesis in the catalytic domain of F(1) is coupled via a rotary mechanism of the central stalk subunits to proton translocation. Its function is as follows. This protein is part of the stalk that links CF(0) to CF(1). It either transmits conformational changes from CF(0) to CF(1) or is implicated in proton conduction. The sequence is that of ATP synthase subunit delta from Haemophilus influenzae (strain PittGG).